The chain runs to 409 residues: Arginine deiminase (409 aa).

Cys-399 acts as the Amidino-cysteine intermediate in catalysis.

The protein belongs to the arginine deiminase family.

Its subcellular location is the cytoplasm. It catalyses the reaction L-arginine + H2O = L-citrulline + NH4(+). It participates in amino-acid degradation; L-arginine degradation via ADI pathway; carbamoyl phosphate from L-arginine: step 1/2. In Streptococcus pneumoniae (strain JJA), this protein is Arginine deiminase.